The primary structure comprises 1342 residues: DNA-directed RNA polymerase subunit beta (1342 aa).

This sequence belongs to the RNA polymerase beta chain family. The RNAP catalytic core consists of 2 alpha, 1 beta, 1 beta' and 1 omega subunit. When a sigma factor is associated with the core the holoenzyme is formed, which can initiate transcription.

It catalyses the reaction RNA(n) + a ribonucleoside 5'-triphosphate = RNA(n+1) + diphosphate. Its function is as follows. DNA-dependent RNA polymerase catalyzes the transcription of DNA into RNA using the four ribonucleoside triphosphates as substrates. This Aliivibrio fischeri (strain ATCC 700601 / ES114) (Vibrio fischeri) protein is DNA-directed RNA polymerase subunit beta.